The sequence spans 424 residues: L-rhamnose isomerase (424 aa).

3 residues coordinate Mn(2+): H261, D293, and D295.

Belongs to the rhamnose isomerase family. Requires Mn(2+) as cofactor.

The protein localises to the cytoplasm. The enzyme catalyses L-rhamnopyranose = L-rhamnulose. It participates in carbohydrate degradation; L-rhamnose degradation; glycerone phosphate from L-rhamnose: step 1/3. Functionally, catalyzes the interconversion of L-rhamnose and L-rhamnulose. This Bacillus subtilis (strain 168) protein is L-rhamnose isomerase.